The sequence spans 314 residues: Carbamate kinase (314 aa).

This sequence belongs to the carbamate kinase family. As to quaternary structure, homodimer.

The protein resides in the cytoplasm. It carries out the reaction hydrogencarbonate + NH4(+) + ATP = carbamoyl phosphate + ADP + H2O + H(+). Its pathway is metabolic intermediate metabolism; carbamoyl phosphate degradation; CO(2) and NH(3) from carbamoyl phosphate: step 1/1. The sequence is that of Carbamate kinase (arcC) from Clostridium perfringens (strain 13 / Type A).